A 445-amino-acid chain; its full sequence is tRNA(Ile2) 2-agmatinylcytidine synthetase TiaS (445 aa).

Residues 278-349 (VVVRGSVAEK…KDGLVLNAEY (72 aa)) constitute a DNA-binding region (OB).

This sequence belongs to the TiaS family.

It localises to the cytoplasm. It carries out the reaction cytidine(34) in tRNA(Ile2) + agmatine + ATP + H2O = 2-agmatinylcytidine(34) in tRNA(Ile2) + AMP + 2 phosphate + 2 H(+). ATP-dependent agmatine transferase that catalyzes the formation of 2-agmatinylcytidine (agm2C) at the wobble position (C34) of tRNA(Ile2), converting the codon specificity from AUG to AUA. This chain is tRNA(Ile2) 2-agmatinylcytidine synthetase TiaS, found in Thermofilum pendens (strain DSM 2475 / Hrk 5).